Consider the following 89-residue polypeptide: Small ribosomal subunit protein bS20 (89 aa).

Residues 1–12 (MANIKSAKKRVK) are compositionally biased toward basic residues. The segment at 1–20 (MANIKSAKKRVKQTVVRNER) is disordered.

This sequence belongs to the bacterial ribosomal protein bS20 family.

Its function is as follows. Binds directly to 16S ribosomal RNA. In Xylella fastidiosa (strain 9a5c), this protein is Small ribosomal subunit protein bS20.